The primary structure comprises 515 residues: Bifunctional purine biosynthesis protein PurH (515 aa).

The MGS-like domain occupies 1 to 145 (MTKRALISVS…KNHASVTVVV (145 aa)).

Belongs to the PurH family.

The catalysed reaction is (6R)-10-formyltetrahydrofolate + 5-amino-1-(5-phospho-beta-D-ribosyl)imidazole-4-carboxamide = 5-formamido-1-(5-phospho-D-ribosyl)imidazole-4-carboxamide + (6S)-5,6,7,8-tetrahydrofolate. It catalyses the reaction IMP + H2O = 5-formamido-1-(5-phospho-D-ribosyl)imidazole-4-carboxamide. Its pathway is purine metabolism; IMP biosynthesis via de novo pathway; 5-formamido-1-(5-phospho-D-ribosyl)imidazole-4-carboxamide from 5-amino-1-(5-phospho-D-ribosyl)imidazole-4-carboxamide (10-formyl THF route): step 1/1. It functions in the pathway purine metabolism; IMP biosynthesis via de novo pathway; IMP from 5-formamido-1-(5-phospho-D-ribosyl)imidazole-4-carboxamide: step 1/1. This is Bifunctional purine biosynthesis protein PurH from Streptococcus pyogenes serotype M3 (strain ATCC BAA-595 / MGAS315).